A 374-amino-acid chain; its full sequence is UDP-N-acetylglucosamine--N-acetylmuramyl-(pentapeptide) pyrophosphoryl-undecaprenol N-acetylglucosamine transferase (374 aa).

UDP-N-acetyl-alpha-D-glucosamine contacts are provided by residues 13 to 15 (TGG), asparagine 124, arginine 165, serine 193, and glutamine 294.

It belongs to the glycosyltransferase 28 family. MurG subfamily.

It is found in the cell inner membrane. The enzyme catalyses di-trans,octa-cis-undecaprenyl diphospho-N-acetyl-alpha-D-muramoyl-L-alanyl-D-glutamyl-meso-2,6-diaminopimeloyl-D-alanyl-D-alanine + UDP-N-acetyl-alpha-D-glucosamine = di-trans,octa-cis-undecaprenyl diphospho-[N-acetyl-alpha-D-glucosaminyl-(1-&gt;4)]-N-acetyl-alpha-D-muramoyl-L-alanyl-D-glutamyl-meso-2,6-diaminopimeloyl-D-alanyl-D-alanine + UDP + H(+). It functions in the pathway cell wall biogenesis; peptidoglycan biosynthesis. Cell wall formation. Catalyzes the transfer of a GlcNAc subunit on undecaprenyl-pyrophosphoryl-MurNAc-pentapeptide (lipid intermediate I) to form undecaprenyl-pyrophosphoryl-MurNAc-(pentapeptide)GlcNAc (lipid intermediate II). This chain is UDP-N-acetylglucosamine--N-acetylmuramyl-(pentapeptide) pyrophosphoryl-undecaprenol N-acetylglucosamine transferase, found in Rhizobium etli (strain CIAT 652).